The chain runs to 125 residues: Ribonuclease P protein component (125 aa).

Belongs to the RnpA family. Consists of a catalytic RNA component (M1 or rnpB) and a protein subunit.

It catalyses the reaction Endonucleolytic cleavage of RNA, removing 5'-extranucleotides from tRNA precursor.. Functionally, RNaseP catalyzes the removal of the 5'-leader sequence from pre-tRNA to produce the mature 5'-terminus. It can also cleave other RNA substrates such as 4.5S RNA. The protein component plays an auxiliary but essential role in vivo by binding to the 5'-leader sequence and broadening the substrate specificity of the ribozyme. The protein is Ribonuclease P protein component of Rhodococcus opacus (strain B4).